The chain runs to 508 residues: NADH-quinone oxidoreductase subunit N 2 (508 aa).

Transmembrane regions (helical) follow at residues 14–34 (SYVA…VIVL), 43–63 (SLVW…WYTA), 90–110 (FTFF…LLSA), 119–139 (GAHM…MFMV), 144–164 (LLTI…LAGI), 179–199 (FLTG…IYGV), 223–243 (GPAL…GFGF), 275–295 (GAAM…APFT), 298–318 (WALI…LVAL), 327–347 (MAYS…ASGL), 353–373 (ISSV…IFAV), 400–420 (AWAL…VGFL), 433–455 (GYLW…YYRV), and 473–493 (TGIS…TIFA).

It belongs to the complex I subunit 2 family. In terms of assembly, NDH-1 is composed of 14 different subunits. Subunits NuoA, H, J, K, L, M, N constitute the membrane sector of the complex.

The protein resides in the cell membrane. It catalyses the reaction a quinone + NADH + 5 H(+)(in) = a quinol + NAD(+) + 4 H(+)(out). In terms of biological role, NDH-1 shuttles electrons from NADH, via FMN and iron-sulfur (Fe-S) centers, to quinones in the respiratory chain. The immediate electron acceptor for the enzyme in this species is believed to be a menaquinone. Couples the redox reaction to proton translocation (for every two electrons transferred, four hydrogen ions are translocated across the cytoplasmic membrane), and thus conserves the redox energy in a proton gradient. The chain is NADH-quinone oxidoreductase subunit N 2 from Symbiobacterium thermophilum (strain DSM 24528 / JCM 14929 / IAM 14863 / T).